The chain runs to 423 residues: Glucose-1-phosphate adenylyltransferase (423 aa).

Alpha-D-glucose 1-phosphate is bound by residues Tyr98, Gly163, 178 to 179, and Ser189; that span reads EK.

This sequence belongs to the bacterial/plant glucose-1-phosphate adenylyltransferase family. Homotetramer.

It catalyses the reaction alpha-D-glucose 1-phosphate + ATP + H(+) = ADP-alpha-D-glucose + diphosphate. Its pathway is glycan biosynthesis; glycogen biosynthesis. In terms of biological role, involved in the biosynthesis of ADP-glucose, a building block required for the elongation reactions to produce glycogen. Catalyzes the reaction between ATP and alpha-D-glucose 1-phosphate (G1P) to produce pyrophosphate and ADP-Glc. The sequence is that of Glucose-1-phosphate adenylyltransferase from Thermotoga maritima (strain ATCC 43589 / DSM 3109 / JCM 10099 / NBRC 100826 / MSB8).